Reading from the N-terminus, the 432-residue chain is Cyclic 2,3-diphosphoglycerate synthetase (432 aa).

It belongs to the cyclic 2,3-diphosphoglycerate synthetase family.

The protein resides in the cytoplasm. It catalyses the reaction (2R)-2,3-bisphosphoglycerate + ATP + H(+) = cyclic (2R)-2,3-bisphosphoglycerate + ADP + phosphate. Functionally, catalyzes the formation of cyclic 2,3-diphosphoglycerate (cDPG) by formation of an intramolecular phosphoanhydride bond at the expense of ATP. The chain is Cyclic 2,3-diphosphoglycerate synthetase from Thermococcus onnurineus (strain NA1).